The primary structure comprises 326 residues: Pyruvate dehydrogenase E1 component subunit beta (326 aa).

Glu-59 serves as a coordination point for thiamine diphosphate.

In terms of assembly, heterodimer of an alpha and a beta chain. The cofactor is thiamine diphosphate.

The enzyme catalyses N(6)-[(R)-lipoyl]-L-lysyl-[protein] + pyruvate + H(+) = N(6)-[(R)-S(8)-acetyldihydrolipoyl]-L-lysyl-[protein] + CO2. The pyruvate dehydrogenase complex catalyzes the overall conversion of pyruvate to acetyl-CoA and CO(2). It contains multiple copies of three enzymatic components: pyruvate dehydrogenase (E1), dihydrolipoamide acetyltransferase (E2) and lipoamide dehydrogenase (E3). This chain is Pyruvate dehydrogenase E1 component subunit beta (pdhB), found in Rickettsia conorii (strain ATCC VR-613 / Malish 7).